Consider the following 1061-residue polypeptide: MSKVRINDLARELEVKSKAILDALADCGVTEKKTHSSSLEADEAVRVRAHFARGSRGAGQGGSRQQNEPKPKIDWSRVSKPGDVLKAIQERNEQETVAAARPAAVPVAPKAPVSAPPAARPSAPRPAVTAAPPPVAARPAGVQPGSQPAVSVQHGAEAQKPAPRRIVPQPRQPSAVVAPPPAATPAIAARPPAAPVAVKPPVTTAPIAQQEKPAAPAAQEVKSALATGPSVPVAVSPSVVVAAAPPPATAFQAPAAPAAPAASQSAPQEAKTPAAEAPPVAPEKPAVPAPPQRRVIMPQTGPRPVYTAPPPSASPVTPRPSGGGIQRGKPIFDRRPTGNSPGGPGGPGGGYGQRPSGPGGRRPMHPTRNQPGGGPPGGRPGFNNGPRPGFGQRPGGFGQRPGMGAPGLVPPPGDTPGRPQRPGAGQKRGGRSNQYPKSKEGPMKGFAPPSRFGGAQIPTEPLPITRTITVTEGISVKDLAEKLGVRGKDLIATLLMRGVFVTVNQSLDGELVKDVARQFGADTTVISFEDQMANEAFENLLSQENPDELELSRPPVVTVMGHVDHGKTSLLDAIRETDVAGGEAGGITQHIGAYKVRINKEDSPAFGREIVFLDTPGHEAFTRMRARGAKVTDIVVIVVAADDGVMPQTLEAVDHAKAANVPIIVAVNKIDKPEAQPDRVKKQLGDRGLVPEDWGGSTVFVDVSAKKRQNLDLLLEMICLVADLGNLKATPGRSAVGTVIEAKLDRGRGAVASVLVQNGTLRAQDSFIVGNTFGKIRAMFDDRGRAIEEAGPSTPVEILGLENMPDAGDTFLVVADRDKAKGIAQYRQMKEREVQLAKSSRVSLEGLAEQIKQAGMKELPLILKGDVTGSVEVLADSLQKMSTEKVRIKVIHSGVGAITESDVLLASASNAIIIGFNVKPDRKSADLAEQENVEIRLHTIIYELQEEITKAMLGLLDPVFKESYLGRAEVLNVFKIPKIGTIAGCRVLDGVLRRDSEIRLMRGGEQVFKGKLTSLKRFKDDAKEVTNGMECGVGLNTSDIQVGDTVEAFTMERVAAELTAQ.

2 disordered regions span residues 51–199 (FARG…VAVK) and 250–460 (AFQA…IPTE). Residues 67 to 77 (NEPKPKIDWSR) are compositionally biased toward basic and acidic residues. 5 stretches are compositionally biased toward low complexity: residues 97 to 113 (VAAARPAAVPVAPKAPV), 120 to 130 (RPSAPRPAVTA), 167 to 177 (VPQPRQPSAVV), 184 to 199 (TPAIAARPPAAPVAVK), and 250 to 278 (AFQAPAAPAAPAASQSAPQEAKTPAAEAP). The segment covering 279 to 291 (PVAPEKPAVPAPP) has biased composition (pro residues). Residues 340–360 (SPGGPGGPGGGYGQRPSGPGG) show a composition bias toward gly residues. Residues 381–391 (GFNNGPRPGFG) are compositionally biased toward low complexity. Over residues 392–405 (QRPGGFGQRPGMGA) the composition is skewed to gly residues. The region spanning 552–728 (SRPPVVTVMG…CLVADLGNLK (177 aa)) is the tr-type G domain. Residues 561–568 (GHVDHGKT) form a G1 region. 561-568 (GHVDHGKT) contributes to the GTP binding site. Residues 586-590 (GITQH) form a G2 region. The segment at 614 to 617 (DTPG) is G3. Residues 614-618 (DTPGH) and 668-671 (NKID) each bind GTP. A G4 region spans residues 668–671 (NKID). The tract at residues 704-706 (SAK) is G5.

Belongs to the TRAFAC class translation factor GTPase superfamily. Classic translation factor GTPase family. IF-2 subfamily.

The protein localises to the cytoplasm. Functionally, one of the essential components for the initiation of protein synthesis. Protects formylmethionyl-tRNA from spontaneous hydrolysis and promotes its binding to the 30S ribosomal subunits. Also involved in the hydrolysis of GTP during the formation of the 70S ribosomal complex. In Acidobacterium capsulatum (strain ATCC 51196 / DSM 11244 / BCRC 80197 / JCM 7670 / NBRC 15755 / NCIMB 13165 / 161), this protein is Translation initiation factor IF-2.